The primary structure comprises 62 residues: Photosystem II reaction center protein Z (62 aa).

Helical transmembrane passes span 8–28 and 41–61; these read ALFA…VILA and FSGA…NSFI.

This sequence belongs to the PsbZ family. In terms of assembly, PSII is composed of 1 copy each of membrane proteins PsbA, PsbB, PsbC, PsbD, PsbE, PsbF, PsbH, PsbI, PsbJ, PsbK, PsbL, PsbM, PsbT, PsbY, PsbZ, Psb30/Ycf12, at least 3 peripheral proteins of the oxygen-evolving complex and a large number of cofactors. It forms dimeric complexes.

The protein localises to the plastid. Its subcellular location is the chloroplast thylakoid membrane. Its function is as follows. May control the interaction of photosystem II (PSII) cores with the light-harvesting antenna, regulates electron flow through the 2 photosystem reaction centers. PSII is a light-driven water plastoquinone oxidoreductase, using light energy to abstract electrons from H(2)O, generating a proton gradient subsequently used for ATP formation. This Chara vulgaris (Common stonewort) protein is Photosystem II reaction center protein Z.